The following is a 196-amino-acid chain: Transmembrane protein 126A (196 aa).

The Mitochondrial matrix portion of the chain corresponds to 1-34 (MESHKPSTSKDDLILNIISRKIKQLPESDRNLLE). Residues 35-55 (YGSAYIGLNAAFGGLIANSLF) form a helical membrane-spanning segment. Over 56–57 (RR) the chain is Mitochondrial intermembrane. The chain crosses the membrane as a helical span at residues 58-78 (ILNVTQARLASSLPMAVIPFL). Residues 79–106 (TANLSYQSLVSLPLSTGDLNCETCTTTR) lie on the Mitochondrial matrix side of the membrane. The chain crosses the membrane as a helical span at residues 107–127 (GALVGLVMGGLYPILLAIPVN). At 128 to 159 (GGLAARYESSPLPQRGNIFNYWITVSKPVFRK) the chain is on the mitochondrial intermembrane side. A helical transmembrane segment spans residues 160–176 (MLFPTLLQTVFASYLGS). The Mitochondrial matrix segment spans residues 177-196 (RQYKLLIKALQLPEPDLEIH).

Belongs to the TMEM126 family. As to quaternary structure, interacts with OXA1L; promoting cotranslational quality control in mitochondria. As to expression, in the retina, significant levels of expression are detected in the ganglion cell layer, the optic nerve head, the outer plexiform layer, and in the outer ellipsoide length of photoreceptor inner segments.

The protein localises to the mitochondrion inner membrane. Functionally, protein required for the cotranslational protein quality control in the inner membrane of the mitochondria. Associates with newly synthesized polypeptides and may act as a chaperone that cooperates with OXA1L for the insertion of newly synthesized mitochondrial proteins into the inner membrane. Required for the assembly of the ND4 module of mitochondrial complex I. In Mus musculus (Mouse), this protein is Transmembrane protein 126A.